The primary structure comprises 332 residues: Adenosine deaminase (332 aa).

Residues His12 and His14 each coordinate Zn(2+). His14, Asp16, and Gly170 together coordinate substrate. Residue His197 participates in Zn(2+) binding. Catalysis depends on Glu200, which acts as the Proton donor. Asp278 contributes to the Zn(2+) binding site. Asp279 provides a ligand contact to substrate.

This sequence belongs to the metallo-dependent hydrolases superfamily. Adenosine and AMP deaminases family. Adenosine deaminase subfamily. It depends on Zn(2+) as a cofactor.

It carries out the reaction adenosine + H2O + H(+) = inosine + NH4(+). It catalyses the reaction 2'-deoxyadenosine + H2O + H(+) = 2'-deoxyinosine + NH4(+). Its function is as follows. Catalyzes the hydrolytic deamination of adenosine and 2-deoxyadenosine. The sequence is that of Adenosine deaminase from Erwinia tasmaniensis (strain DSM 17950 / CFBP 7177 / CIP 109463 / NCPPB 4357 / Et1/99).